Consider the following 1370-residue polypeptide: DNA-directed RNA polymerase subunit beta (1370 aa).

Belongs to the RNA polymerase beta chain family. In terms of assembly, the RNAP catalytic core consists of 2 alpha, 1 beta, 1 beta' and 1 omega subunit. When a sigma factor is associated with the core the holoenzyme is formed, which can initiate transcription.

It catalyses the reaction RNA(n) + a ribonucleoside 5'-triphosphate = RNA(n+1) + diphosphate. Functionally, DNA-dependent RNA polymerase catalyzes the transcription of DNA into RNA using the four ribonucleoside triphosphates as substrates. The chain is DNA-directed RNA polymerase subunit beta from Bordetella bronchiseptica (strain ATCC BAA-588 / NCTC 13252 / RB50) (Alcaligenes bronchisepticus).